We begin with the raw amino-acid sequence, 760 residues long: ATP-dependent DNA helicase Hel308 (760 aa).

ATP is bound by residues Gln-28 and 46–53; that span reads IPTASGKT. The 167-residue stretch at 33–199 folds into the Helicase ATP-binding domain; it reads EMGLLEKKNL…WLGAALVLSE (167 aa). The short motif at 144 to 147 is the DEAH box element; it reads DEIH. The Helicase C-terminal domain maps to 232–426; the sequence is AVNLVLDTIK…SKLGTENALR (195 aa).

It belongs to the helicase family. Hel308 subfamily. In terms of assembly, monomer.

The catalysed reaction is Couples ATP hydrolysis with the unwinding of duplex DNA by translocating in the 3'-5' direction.. The enzyme catalyses ATP + H2O = ADP + phosphate + H(+). DNA-dependent ATPase and 3'-5' DNA helicase that may be involved in repair of stalled replication forks. This chain is ATP-dependent DNA helicase Hel308, found in Methanococcoides burtonii (strain DSM 6242 / NBRC 107633 / OCM 468 / ACE-M).